The chain runs to 120 residues: MEQLTKNQAVATSQEAFQNQNEPQLRDENVHNDKSVHGVLNPTYQAGLRRDAVQPDIEAERKKRDEIEAGKSYCSRRFGGATCDDKSAQIYARFDKNDWRIQPAEFYRFHDAEVNTFGYF.

Over residues 1 to 23 the composition is skewed to polar residues; the sequence is MEQLTKNQAVATSQEAFQNQNEP. A disordered region spans residues 1–64; the sequence is MEQLTKNQAV…PDIEAERKKR (64 aa). 2 stretches are compositionally biased toward basic and acidic residues: residues 24 to 36 and 48 to 64; these read QLRD…DKSV and LRRD…RKKR.

The protein belongs to the microviridae B protein family. As to quaternary structure, component of the procapsid complex composed of 60 copies of the internally located B, 240 copies of the external scaffolding protein D, 60 copies of each of the viral structural proteins F and G proteins, and 12 copies of H. In terms of processing, the proteolytic cleavage of the internal scaffolding protein B releases the scaffold protein in order to continue virion assembly.

It is found in the host cytoplasm. Functionally, participates in the assembly of the viral procapsid in the cytoplasm. Forms first a 12S pre-assembly complex with protein H, and F and G pentamers, then twelve 12S complexes are joined by the D protein to form the procapsid. Internal scaffold protein B is released from the procapsid upon genome packaging. Autoproteolytic activity cleaves protein B and probably facilitates its removal through the pores of the procapsid. The chain is Internal scaffolding protein B (B) from Enterobacteria phage S13 (Bacteriophage S13).